A 316-amino-acid chain; its full sequence is 4-diphosphocytidyl-2-C-methyl-D-erythritol kinase (316 aa).

Lys-32 is an active-site residue. 126–136 (PVGAGLGGGSA) provides a ligand contact to ATP. Residue Asp-168 is part of the active site.

Belongs to the GHMP kinase family. IspE subfamily.

The enzyme catalyses 4-CDP-2-C-methyl-D-erythritol + ATP = 4-CDP-2-C-methyl-D-erythritol 2-phosphate + ADP + H(+). It participates in isoprenoid biosynthesis; isopentenyl diphosphate biosynthesis via DXP pathway; isopentenyl diphosphate from 1-deoxy-D-xylulose 5-phosphate: step 3/6. Its function is as follows. Catalyzes the phosphorylation of the position 2 hydroxy group of 4-diphosphocytidyl-2C-methyl-D-erythritol. In Bifidobacterium longum (strain NCC 2705), this protein is 4-diphosphocytidyl-2-C-methyl-D-erythritol kinase.